A 74-amino-acid chain; its full sequence is Defensin-like protein P322 (74 aa).

The N-terminal stretch at 1-19 (MRFFATFFLLAMLVVATKM) is a signal peptide. Disulfide bonds link Cys-30–Cys-74, Cys-41–Cys-61, Cys-47–Cys-68, and Cys-51–Cys-70.

It belongs to the DEFL family. Protease inhibitor I18 (RTI/MTI-2) subfamily. In terms of tissue distribution, tuber.

It is found in the secreted. The polypeptide is Defensin-like protein P322 (Solanum tuberosum (Potato)).